The following is a 432-amino-acid chain: Enolase (432 aa).

Glutamine 167 is a binding site for (2R)-2-phosphoglycerate. The Proton donor role is filled by glutamate 209. Positions 246, 291, and 318 each coordinate Mg(2+). (2R)-2-phosphoglycerate contacts are provided by lysine 343, arginine 372, serine 373, and lysine 394. Lysine 343 serves as the catalytic Proton acceptor.

The protein belongs to the enolase family. As to quaternary structure, component of the RNA degradosome, a multiprotein complex involved in RNA processing and mRNA degradation. Mg(2+) is required as a cofactor.

The protein resides in the cytoplasm. The protein localises to the secreted. It is found in the cell surface. The enzyme catalyses (2R)-2-phosphoglycerate = phosphoenolpyruvate + H2O. Its pathway is carbohydrate degradation; glycolysis; pyruvate from D-glyceraldehyde 3-phosphate: step 4/5. Its function is as follows. Catalyzes the reversible conversion of 2-phosphoglycerate (2-PG) into phosphoenolpyruvate (PEP). It is essential for the degradation of carbohydrates via glycolysis. This is Enolase from Aliivibrio salmonicida (strain LFI1238) (Vibrio salmonicida (strain LFI1238)).